The following is a 177-amino-acid chain: Protein PrsK (177 aa).

A signal peptide spans 1-21 (MIKSTGALLLFAALSAGQAMA).

It is found in the fimbrium. This Escherichia coli protein is Protein PrsK (prsK).